Here is a 160-residue protein sequence, read N- to C-terminus: Cyanate hydratase (160 aa).

Catalysis depends on residues arginine 100, glutamate 103, and serine 126.

This sequence belongs to the cyanase family.

The enzyme catalyses cyanate + hydrogencarbonate + 3 H(+) = NH4(+) + 2 CO2. Its function is as follows. Catalyzes the reaction of cyanate with bicarbonate to produce ammonia and carbon dioxide. The chain is Cyanate hydratase from Aspergillus oryzae (strain ATCC 42149 / RIB 40) (Yellow koji mold).